The following is a 138-amino-acid chain: Large ribosomal subunit protein uL16 (138 aa).

The segment covering 1–16 (MLIPRRVKHRKQHHPG) has biased composition (basic residues). Residues 1–25 (MLIPRRVKHRKQHHPGRSGQATGGT) are disordered.

Belongs to the universal ribosomal protein uL16 family. As to quaternary structure, part of the 50S ribosomal subunit.

In terms of biological role, binds 23S rRNA and is also seen to make contacts with the A and possibly P site tRNAs. This chain is Large ribosomal subunit protein uL16, found in Renibacterium salmoninarum (strain ATCC 33209 / DSM 20767 / JCM 11484 / NBRC 15589 / NCIMB 2235).